The primary structure comprises 987 residues: Collagen alpha-1(I) chain (987 aa).

Positions 1–21 (SVPGPMGPSGPRGLPGPPGPG) are enriched in pro residues. Residues 1–987 (SVPGPMGPSG…PGPPGPPGPP (987 aa)) form a disordered region. Residues Pro15, Pro18, Pro20, Pro29, Pro32, Pro35, Pro50, Pro65, Pro71, Pro80, and Pro86 each carry the 4-hydroxyproline modification. The segment covering 23 to 41 (QGFQGPPGEPGEPGSSGPM) has biased composition (low complexity). A compositionally biased stretch (basic and acidic residues) spans 53–67 (NGDDGEAGKPGRPGE). 5-hydroxylysine; alternate is present on Lys89. Lys89 carries O-linked (Gal...) hydroxylysine; alternate glycosylation. At Ser95 the chain carries Phosphoserine. Over residues 103 to 119 (DAGPAGPKGEPGSPGEN) the composition is skewed to low complexity. 4-hydroxyproline is present on residues Pro113, Pro116, Pro122, Pro131, Pro137, Pro158, Pro167, Pro170, Pro197, Pro200, Pro212, Pro218, Pro227, Pro233, Pro236, and Pro251. A compositionally biased stretch (low complexity) spans 137–155 (PGASGPAGARGNDGAAGAA). A compositionally biased stretch (pro residues) spans 157–169 (PPGPTGPAGPPGF). Positions 203-253 (AGAAGPAGNPGADGQPGAKGANGAPGIAGAPGFPGARGPSGPQGPSGAPGP) are enriched in low complexity. Lys254 is modified (5-hydroxylysine). 4-hydroxyproline occurs at positions 260, 263, 275, 284, 299, 305, 314, and 320. Residues 309–318 (GERGGPGSRG) are compositionally biased toward gly residues. Lys329 carries the 5-hydroxylysine modification. 24 positions are modified to 4-hydroxyproline: Pro338, Pro347, Pro353, Pro359, Pro368, Pro371, Pro380, Pro389, Pro395, Pro407, Pro416, Pro425, Pro428, Pro446, Pro468, Pro474, Pro480, Pro486, Pro492, Pro504, Pro513, Pro526, Pro532, and Pro541. Low complexity predominate over residues 362-388 (KGLTGSPGSPGPDGKTGPPGPAGQDGR). Residues 397 to 416 (ARGQAGVMGFPGPKGAAGEP) are compositionally biased toward low complexity. Low complexity predominate over residues 458–483 (QGPAPGFQGLPGPAGPPGEAGKPGEQ). The residue at position 553 (Lys553) is a 5-hydroxylysine. Residues Pro559, Pro574, and Pro580 each carry the 4-hydroxyproline modification. The span at 586-600 (SGPSGPAGPTGARGA) shows a compositional bias: low complexity. Phosphoserine is present on Ser589. A 4-hydroxyproline mark is found at Pro601, Pro607, Pro610, Pro619, Pro625, Pro643, Pro652, and Pro661. The span at 613 to 640 (AGFAGPPGADGQPGAKGEPGDAGAKGDA) shows a compositional bias: low complexity. Pro residues predominate over residues 642 to 654 (PPGPAGPTGPPGP). Lys664 is modified (5-hydroxylysine). Residues 669–685 (SAGPPGATGFPGAAGRV) are compositionally biased toward low complexity. Residues Pro673 and Pro679 each carry the 4-hydroxyproline modification. Pro687 is subject to 3-hydroxyproline. 4-hydroxyproline occurs at positions 688, 697, 700, 721, 730, 738, 747, 765, 774, 777, 783, 798, 804, 810, 819, and 825. Low complexity predominate over residues 714 to 723 (ETGPAGRPGE). Over residues 735 to 747 (KGSPGADGPAGAP) the composition is skewed to low complexity. The span at 797-807 (PPGPMGPPGLA) shows a compositional bias: pro residues. Residues 809–824 (PPGESGREGSPGAEGS) are compositionally biased toward low complexity. Position 834 is a 5-hydroxylysine (Lys834). The segment covering 843 to 858 (AGPPGAPGAPGAPGPV) has biased composition (pro residues). Pro846, Pro849, and Pro852 each carry 4-hydroxyproline. Residues 879–893 (AGPAGARGPAGPQGP) are compositionally biased toward low complexity. Basic and acidic residues predominate over residues 894–905 (RGDKGETGEQGD). The residue at position 897 (Lys897) is a 5-hydroxylysine. Residues Pro918, Pro921, Pro939, and Pro954 each carry the 4-hydroxyproline modification. Residues 921 to 954 (PGEQGPSGASGPAGPRGPPGSAGSPGKDGLNGLP) are compositionally biased toward low complexity. Pro959 carries the post-translational modification 3-hydroxyproline. Pro960 bears the 4-hydroxyproline mark. Residues 972–987 (VGPPGPPGPPGPPGPP) are compositionally biased toward pro residues. At Pro974 the chain carries 3-hydroxyproline. Pro975 carries the 4-hydroxyproline modification. Pro977 is modified (3-hydroxyproline). Pro978 is modified (4-hydroxyproline). At Pro980 the chain carries 3-hydroxyproline. A 4-hydroxyproline mark is found at Pro981, Pro984, and Pro987.

This sequence belongs to the fibrillar collagen family. In terms of assembly, trimers of one alpha 2(I) and two alpha 1(I) chains. Contains mostly 4-hydroxyproline. Proline residues at the third position of the tripeptide repeating unit (G-X-Y) are hydroxylated in some or all of the chains. In terms of processing, contains 3-hydroxyproline at a few sites. This modification occurs on the first proline residue in the sequence motif Gly-Pro-Hyp, where Hyp is 4-hydroxyproline. Post-translationally, lysine residues at the third position of the tripeptide repeating unit (G-X-Y) are 5-hydroxylated in some or all of the chains. O-glycosylated on hydroxylated lysine residues. The O-linked glycan consists of a Glc-Gal disaccharide. As to expression, expressed in bones.

Its subcellular location is the secreted. The protein localises to the extracellular space. The protein resides in the extracellular matrix. Functionally, type I collagen is a member of group I collagen (fibrillar forming collagen). This Glossotherium robustum (Ground sloth) protein is Collagen alpha-1(I) chain.